The primary structure comprises 249 residues: Derlin-2 (249 aa).

Residues 1 to 21 are Cytoplasmic-facing; the sequence is MAQAVEEWYRQMPIITRSYLT. The helical transmembrane segment at 22 to 42 threads the bilayer; sequence AAVVTTVGCTLEIISPYHLYL. Residues 43–96 are Lumenal-facing; that stretch reads NPKLVVQHYEIWRLVTNFLYFRKMDLDFLFHMFFLARYCKLLEENSFRGRTADF. Residues 97–117 form a helical membrane-spanning segment; the sequence is FYMLLFGATVLTGIVLIGGMI. At 118–122 the chain is on the cytoplasmic side; that stretch reads PYISE. Residues 123–143 form a helical membrane-spanning segment; the sequence is TFARILFLSNSLTFMMVYVWS. The Lumenal portion of the chain corresponds to 144 to 152; the sequence is KHNPFIHMS. A helical membrane pass occupies residues 153-173; that stretch reads FLGLFTFTAAYLPWVLLGFSI. Residues 174-249 are Cytoplasmic-facing; the sequence is LVGSSTWVDL…GAMGADPQAQ (76 aa).

This sequence belongs to the derlin family.

It is found in the endoplasmic reticulum membrane. May be involved in the degradation process of specific misfolded endoplasmic reticulum (ER) luminal proteins. The chain is Derlin-2 (DER2) from Oryza sativa subsp. japonica (Rice).